Reading from the N-terminus, the 270-residue chain is Eukaryotic translation initiation factor 2 subunit beta (270 aa).

The interval 1-38 (MADEEQMERKEEATEIAPFDPTKKKKKKKVVIQDPADE) is disordered.

This sequence belongs to the eIF-2-beta/eIF-5 family. In terms of assembly, eukaryotic translation initiation factor 2 eIF2 is a heterotrimeric complex composed of an alpha, a beta and a gamma subunit.

It is found in the cytoplasm. Its subcellular location is the cytosol. In terms of biological role, component of the eIF2 complex that functions in the early steps of protein synthesis by forming a ternary complex with GTP and initiator tRNA. This complex binds to a 40S ribosomal subunit, followed by mRNA binding to form a 43S pre-initiation complex (43S PIC). Junction of the 60S ribosomal subunit to form the 80S initiation complex is preceded by hydrolysis of the GTP bound to eIF2 and release of an eIF2-GDP binary complex. In order for eIF2 to recycle and catalyze another round of initiation, the GDP bound to eIF2 must exchange with GTP by way of a reaction catalyzed by eIF2B. This Triticum aestivum (Wheat) protein is Eukaryotic translation initiation factor 2 subunit beta.